Reading from the N-terminus, the 232-residue chain is Cytidylate kinase (232 aa).

15 to 23 provides a ligand contact to ATP; that stretch reads GPAGAGKST. Positions 164–192 are disordered; it reads KEDPPPISQGQLAAEMKERDMRDSTRADA. Residues 178 to 189 are compositionally biased toward basic and acidic residues; it reads EMKERDMRDSTR.

The protein belongs to the cytidylate kinase family. Type 1 subfamily.

It is found in the cytoplasm. It carries out the reaction CMP + ATP = CDP + ADP. The catalysed reaction is dCMP + ATP = dCDP + ADP. In Solibacter usitatus (strain Ellin6076), this protein is Cytidylate kinase.